Consider the following 23-residue polypeptide: Protein YqfH (23 aa).

The polypeptide is Protein YqfH (Escherichia coli (strain K12)).